We begin with the raw amino-acid sequence, 89 residues long: Large ribosomal subunit protein eL43 (89 aa).

Cys38, Cys41, Cys56, and Cys59 together coordinate Zn(2+). The C4-type zinc finger occupies 38–59; that stretch reads CPVCHKRAVKRVGTGIWRCTKC.

Belongs to the eukaryotic ribosomal protein eL43 family. Putative zinc-binding subfamily. Part of the 50S ribosomal subunit. The cofactor is Zn(2+).

Its function is as follows. Binds to the 23S rRNA. This Methanopyrus kandleri (strain AV19 / DSM 6324 / JCM 9639 / NBRC 100938) protein is Large ribosomal subunit protein eL43.